The following is a 589-amino-acid chain: Coronatine-insensitive protein homolog 2 (589 aa).

One can recognise an F-box domain in the interval 18–59; that stretch reads IPDVALGLVMGFVEDPWDRDAISLVCRHWCRVDALSRKHVTV. Residues arginine 87, arginine 352, arginine 414, and arginine 501 each contribute to the jasmonate site.

As to quaternary structure, interacts with TIFY9/JAZ5, TIFY11C/JAZ11 and TIFY11D/JAZ12 in a coronatine-dependent manner.

Involved in jasmonate (JA) signaling. Required for jasmonate signaling in plant defense responses. Component of SCF(COI1) E3 ubiquitin ligase complexes, which may mediate the ubiquitination and subsequent proteasomal degradation of target proteins, including TIFY/JAZ family. This Oryza sativa subsp. indica (Rice) protein is Coronatine-insensitive protein homolog 2.